Consider the following 1463-residue polypeptide: Clustered mitochondria protein homolog (1463 aa).

The interval 1-79 (MAKNKKQNGK…ETEQQQQQQE (79 aa)) is disordered. Positions 10–22 (KAKTPPVVAAAAG) are enriched in low complexity. Positions 374–616 (RAEDTFSSKL…RTFPPDVNFL (243 aa)) constitute a Clu domain. 3 disordered regions span residues 684–753 (AQKT…SEDA), 942–988 (GDGQ…SVPS), and 1387–1463 (QKEA…RRKS). Positions 692 to 702 (KQAAIEAAAPA) are enriched in low complexity. Residues 703-731 (EGDKTPAKDAKDGKEAGKDANDGKEEGST) show a composition bias toward basic and acidic residues. A compositionally biased stretch (basic residues) spans 955 to 964 (GGKKQNKQSK). Residues 965–980 (RGGGGGGGKGAAGGGR) show a composition bias toward gly residues. The segment covering 1438-1456 (AEAASHTAGGAAANTAAPA) has biased composition (low complexity).

The protein belongs to the CLU family.

It localises to the cytoplasm. Its function is as follows. mRNA-binding protein involved in proper cytoplasmic distribution of mitochondria. The protein is Clustered mitochondria protein homolog of Anopheles gambiae (African malaria mosquito).